A 179-amino-acid chain; its full sequence is Ribosome maturation factor RimP (179 aa).

The protein belongs to the RimP family.

It localises to the cytoplasm. Functionally, required for maturation of 30S ribosomal subunits. This is Ribosome maturation factor RimP from Chlorobium chlorochromatii (strain CaD3).